Consider the following 170-residue polypeptide: uncharacterized protein (170 aa).

5 helical membrane passes run 21–41 (NISL…AAVL), 55–75 (AYTS…TLLL), 86–106 (TGIA…YWLW), 117–137 (ISGV…VSLL), and 143–163 (FSAA…TLLP). The 127-residue stretch at 35–161 (IIFAAVLRWT…IMLATLGSTL (127 aa)) folds into the EamA domain.

Belongs to the EamA transporter family.

It is found in the cell membrane. This is an uncharacterized protein from Haemophilus influenzae (strain ATCC 51907 / DSM 11121 / KW20 / Rd).